The primary structure comprises 3120 residues: DNA-directed RNA polymerase subunit beta'' (3120 aa).

Cys-323, Cys-396, Cys-403, and Cys-406 together coordinate Zn(2+). The tract at residues 595–1130 (FIGEGKQNVL…LKTLVLKKWF (536 aa)) is insert-1. The interval 1796-2346 (KGHLVAYARP…NGIIQAKSLL (551 aa)) is insert-2. The tract at residues 2422 to 2610 (NSNFLENTHF…PEGEGEKDMT (189 aa)) is insert-3. The tract at residues 2726–2801 (FSKKRWKKSI…KQNQTIILAL (76 aa)) is insert-4. Residues 2856 to 2996 (ASKMSEYMFS…LNQLLSNNLD (141 aa)) are insert-5. The disordered stretch occupies residues 2926 to 2956 (EGIDSSKIPSSNIPEGKVTQNNKRKSTRKNV). The segment covering 2932–2946 (KIPSSNIPEGKVTQN) has biased composition (polar residues).

This sequence belongs to the RNA polymerase beta' chain family. RpoC2 subfamily. In terms of assembly, in plastids the minimal PEP RNA polymerase catalytic core is composed of four subunits: alpha, beta, beta', and beta''. When a (nuclear-encoded) sigma factor is associated with the core the holoenzyme is formed, which can initiate transcription. Requires Zn(2+) as cofactor.

The protein resides in the plastid. It is found in the chloroplast. It carries out the reaction RNA(n) + a ribonucleoside 5'-triphosphate = RNA(n+1) + diphosphate. In terms of biological role, DNA-dependent RNA polymerase catalyzes the transcription of DNA into RNA using the four ribonucleoside triphosphates as substrates. The sequence is that of DNA-directed RNA polymerase subunit beta'' from Chlamydomonas reinhardtii (Chlamydomonas smithii).